The sequence spans 653 residues: Rab proteins geranylgeranyltransferase component A 1 (653 aa).

Positions 606–653 (PPPPNPEDIILDGDSLQPEASESSAIPEANSETFKESTNLGNLEESSE) are disordered. Positions 623-646 (PEASESSAIPEANSETFKESTNLG) are enriched in polar residues.

The protein belongs to the Rab GDI family. As to quaternary structure, monomer. Heterotrimer composed of RABGGTA, RABGGTB and CHM; within this trimer, RABGGTA and RABGGTB form the catalytic component B, while CHM (component A) mediates Rab protein binding. Can associate with the Rab GGTase dimer (RGGT or component B) prior to Rab protein binding; the association is stabilized by geranylgeranyl pyrophosphate (GGpp). The CHM:RGGT:Rab complex is destabilized by GGpp. Interacts with RAB1A, RAB1B, RAB5A, RAB7A and RAB27A and mediates their prenylation. Interacts with the non-phosphorylated forms of RAB3A, RAB3B, RAB3C, RAB3D, RAB5B, RAB5C, RAB8A, RAB8B, RAB10, RAB12, RAB35, and RAB43.

Its subcellular location is the cytoplasm. The protein localises to the cytosol. Substrate-binding subunit of the Rab geranylgeranyltransferase (GGTase) complex. Binds unprenylated Rab proteins and presents the substrate peptide to the catalytic component B composed of RABGGTA and RABGGTB, and remains bound to it after the geranylgeranyl transfer reaction. The component A is thought to be regenerated by transferring its prenylated Rab back to the donor membrane. Besides, a pre-formed complex consisting of CHM and the Rab GGTase dimer (RGGT or component B) can bind to and prenylate Rab proteins; this alternative pathway is proposed to be the predominant pathway for Rab protein geranylgeranylation. The protein is Rab proteins geranylgeranyltransferase component A 1 (CHM) of Homo sapiens (Human).